Here is a 210-residue protein sequence, read N- to C-terminus: 23.5 kDa heat shock protein, mitochondrial (210 aa).

The N-terminal 20 residues, M1–V20, are a transit peptide targeting the mitochondrion. The region spanning M102–D210 is the sHSP domain.

Belongs to the small heat shock protein (HSP20) family. As to quaternary structure, may form oligomeric structures.

Its subcellular location is the mitochondrion. The chain is 23.5 kDa heat shock protein, mitochondrial (HSP23.5) from Arabidopsis thaliana (Mouse-ear cress).